A 172-amino-acid polypeptide reads, in one-letter code: Bcl-2-related protein A1 (172 aa).

Residues K77 to G97 carry the BH1 motif. The short motif at E132–K147 is the BH2 element.

Belongs to the Bcl-2 family. Interacts directly with BCL2L11/BIM and PMAIP1. Interacts directly with BAK1, BID, BMF and BBC3. Interacts with BOP. Interacts with isoform 3, isoform 4 and isoform 5 of ING4. Interacts with UBQLN4. As to expression, expressed in hemopoietic tissues, including bone marrow, spleen and thymus.

Its subcellular location is the cytoplasm. Its function is as follows. Retards apoptosis induced by IL-3 deprivation. May function in the response of hemopoietic cells to external signals and in maintaining endothelial survival during infection. Can inhibit apoptosis induced by serum starvation in the mammary epithelial cell line HC11. This Mus musculus (Mouse) protein is Bcl-2-related protein A1 (Bcl2a1).